The sequence spans 248 residues: Oligo(A)/oligo(T)-binding protein (248 aa).

Residues 1–36 (MAKTLAQGRKPGSGRKPGKGKTLREGRKPGSGRRRR) mediate DNA binding. 2 disordered regions span residues 1–127 (MAKT…LQQQ) and 219–248 (TAASNQPRTQPSPAAHITKNSDSTEKNATI). A run of 3 repeats spans residues 8–12 (GRKPG), 14–18 (GRKPG), and 26–30 (GRKPG). The tract at residues 8–30 (GRKPGSGRKPGKGKTLREGRKPG) is 3 X 5 AA repeats of G-R-K-P-G. The segment covering 12–21 (GSGRKPGKGK) has biased composition (basic residues). The segment covering 37–71 (QDTGGKETDGSQQDQESRLISSRDMEAVDALRELT) has biased composition (basic and acidic residues). 2 stretches are compositionally biased toward low complexity: residues 72–100 (HSPSSHSAHNSSAAPPPHAAAASTSLPPS) and 111–127 (QQQQQQQQQQQQLLQQQ).

Binds as a dimer or higher oligomer.

In terms of biological role, DNA-binding protein that recognizes oligo(A).oligo(T) tracts (A.T DNA). Can bind to any 11 bp sequence in which 10 bases conform to an uninterrupted oligo(A).oligo(T) tract. The protein is Oligo(A)/oligo(T)-binding protein (DAT1) of Saccharomyces cerevisiae (strain ATCC 204508 / S288c) (Baker's yeast).